A 188-amino-acid chain; its full sequence is Selenoprotein S B (188 aa).

Residues 29 to 49 (EALSNYGWYILLGCIVIYFLI) traverse the membrane as a helical segment. Positions 116-125 (TWDRMQEGKS) are enriched in basic and acidic residues. A disordered region spans residues 116–188 (TWDRMQEGKS…RGPSSGGSUG (73 aa)). Residues 136-147 (ASPRTSTSSSAP) are compositionally biased toward low complexity. U187 is a non-standard amino acid (selenocysteine).

The protein belongs to the selenoprotein S family.

Its subcellular location is the endoplasmic reticulum membrane. It localises to the cytoplasm. Its function is as follows. Involved in the degradation process of misfolded endoplasmic reticulum (ER) luminal proteins. Participates in the transfer of misfolded proteins from the ER to the cytosol, where they are destroyed by the proteasome in a ubiquitin-dependent manner. This Xenopus laevis (African clawed frog) protein is Selenoprotein S B (vimp-b).